We begin with the raw amino-acid sequence, 513 residues long: Gluconokinase (513 aa).

ATP-binding positions include K16, T261, G300, and 412–416; that span reads GFARS.

Belongs to the FGGY kinase family.

It catalyses the reaction D-gluconate + ATP = 6-phospho-D-gluconate + ADP + H(+). The protein operates within carbohydrate acid metabolism; D-gluconate degradation. Its activity is regulated as follows. Catabolite repression by gluconate. This chain is Gluconokinase (gntK), found in Bacillus subtilis (strain 168).